Reading from the N-terminus, the 998-residue chain is Collagen alpha-1(I) chain (998 aa).

The disordered stretch occupies residues 1–998 (SYGYDEKGGV…GPPGPPGPPG (998 aa)). Low complexity predominate over residues 9–22 (GVSVPGPMGPSGPR). 4-hydroxyproline occurs at positions 25, 28, 30, 39, 42, 45, 59, 74, 80, 89, and 95. Basic and acidic residues predominate over residues 62–76 (NGDDGEAGKPGRPGE). Position 98 is a 5-hydroxylysine; alternate (Lys98). An O-linked (Gal...) hydroxylysine; alternate glycan is attached at Lys98. A Phosphoserine modification is found at Ser104. Over residues 112–128 (DAGPAGPKGEPGSPGEN) the composition is skewed to low complexity. 16 positions are modified to 4-hydroxyproline: Pro122, Pro125, Pro131, Pro140, Pro146, Pro167, Pro176, Pro179, Pro206, Pro209, Pro221, Pro227, Pro236, Pro242, Pro245, and Pro260. The span at 146 to 164 (PGASGPAGARGNDGATGAA) shows a compositional bias: low complexity. Residues 166 to 178 (PPGPTGPAGPPGF) show a composition bias toward pro residues. The segment covering 212–251 (AGAAGPAGNPGADGQPGAKGANGAPGIAGAPGFPGARGPS) has biased composition (low complexity). Lys263 carries the post-translational modification 5-hydroxylysine. Residues Pro269, Pro272, Pro284, Pro293, Pro308, Pro314, Pro323, and Pro329 each carry the 4-hydroxyproline modification. Residues 318–327 (GERGGPGSRG) show a composition bias toward gly residues. Lys338 carries the post-translational modification 5-hydroxylysine. Pro347, Pro356, Pro362, Pro368, Pro377, Pro380, Pro389, Pro398, Pro404, Pro416, Pro425, Pro434, Pro437, Pro455, Pro472, Pro478, Pro484, Pro490, Pro496, Pro502, Pro514, Pro523, Pro537, Pro543, and Pro552 each carry 4-hydroxyproline. The span at 371-397 (KGLTGSPGSPGPDGKTGPPGPAGQDGR) shows a compositional bias: low complexity. The segment covering 406–425 (ARGQAGVMGFPGPKGAAGEP) has biased composition (low complexity). Residues 484-493 (PGEAGKPGEQ) are compositionally biased toward low complexity. Position 564 is a 5-hydroxylysine (Lys564). 4-hydroxyproline is present on residues Pro570, Pro585, and Pro591. Residues 597–611 (SGPSGPAGPTGARGA) are compositionally biased toward low complexity. Ser600 is subject to Phosphoserine. Pro612, Pro618, Pro621, Pro630, Pro636, Pro654, Pro663, and Pro672 each carry 4-hydroxyproline. Over residues 624 to 651 (AGFAGPPGADGQPGAKGEPGDAGAKGDA) the composition is skewed to low complexity. Positions 653–665 (PPGPAGPTGPPGP) are enriched in pro residues. At Lys675 the chain carries 5-hydroxylysine. Positions 680-696 (SAGPPGATGFPGAAGRV) are enriched in low complexity. 2 positions are modified to 4-hydroxyproline: Pro684 and Pro690. A 3-hydroxyproline modification is found at Pro698. 16 positions are modified to 4-hydroxyproline: Pro699, Pro708, Pro711, Pro732, Pro741, Pro749, Pro758, Pro776, Pro785, Pro788, Pro794, Pro809, Pro815, Pro821, Pro830, and Pro836. Over residues 725-734 (ETGPAGRPGE) the composition is skewed to low complexity. Residues 746-758 (KGSPGADGPAGAP) show a composition bias toward low complexity. Pro residues predominate over residues 808–818 (PPGPMGPPGLA). 5-hydroxylysine is present on Lys845. Residues 853-868 (PGPPGAPGAPGAPGPV) show a composition bias toward pro residues. A 4-hydroxyproline mark is found at Pro856, Pro859, and Pro862. Over residues 889 to 903 (AGPAGARGPAGPQGP) the composition is skewed to low complexity. Basic and acidic residues predominate over residues 904–918 (RGDKGETGEQGDRGI). Residue Lys907 is modified to 5-hydroxylysine. Lys919 carries the post-translational modification 5-hydroxylysine; alternate. Lys919 is a glycosylation site (O-linked (Gal...) hydroxylysine; alternate). A 4-hydroxyproline mark is found at Pro934, Pro937, Pro955, and Pro970. A compositionally biased stretch (low complexity) spans 937-970 (PGEQGPSGASGPAGPRGPPGSAGSPGKDGLNGLP). Pro975 is subject to 3-hydroxyproline. A 4-hydroxyproline modification is found at Pro976. Positions 988–998 (VGPPGPPGPPG) are enriched in pro residues. Pro990 carries the post-translational modification 3-hydroxyproline. Pro991 bears the 4-hydroxyproline mark. Pro993 is modified (3-hydroxyproline). Pro994 carries the 4-hydroxyproline modification. At Pro996 the chain carries 3-hydroxyproline. The residue at position 997 (Pro997) is a 4-hydroxyproline.

The protein belongs to the fibrillar collagen family. As to quaternary structure, trimers of one alpha 2(I) and two alpha 1(I) chains. In terms of processing, contains mostly 4-hydroxyproline. Proline residues at the third position of the tripeptide repeating unit (G-X-Y) are hydroxylated in some or all of the chains. Contains 3-hydroxyproline at a few sites. This modification occurs on the first proline residue in the sequence motif Gly-Pro-Hyp, where Hyp is 4-hydroxyproline. Post-translationally, lysine residues at the third position of the tripeptide repeating unit (G-X-Y) are 5-hydroxylated in some or all of the chains. In terms of processing, O-glycosylated on hydroxylated lysine residues. The O-linked glycan consists of a Glc-Gal disaccharide. In terms of tissue distribution, expressed in bones.

Its subcellular location is the secreted. It is found in the extracellular space. It localises to the extracellular matrix. In terms of biological role, type I collagen is a member of group I collagen (fibrillar forming collagen). The polypeptide is Collagen alpha-1(I) chain (Nothrotheriops shastensis (Shasta ground sloth)).